A 726-amino-acid chain; its full sequence is 1,4-alpha-glucan branching enzyme GlgB (726 aa).

Asp-407 acts as the Nucleophile in catalysis. Residue Glu-460 is the Proton donor of the active site.

Belongs to the glycosyl hydrolase 13 family. GlgB subfamily. As to quaternary structure, monomer.

It carries out the reaction Transfers a segment of a (1-&gt;4)-alpha-D-glucan chain to a primary hydroxy group in a similar glucan chain.. It functions in the pathway glycan biosynthesis; glycogen biosynthesis. Its function is as follows. Catalyzes the formation of the alpha-1,6-glucosidic linkages in glycogen by scission of a 1,4-alpha-linked oligosaccharide from growing alpha-1,4-glucan chains and the subsequent attachment of the oligosaccharide to the alpha-1,6 position. This chain is 1,4-alpha-glucan branching enzyme GlgB, found in Hydrogenovibrio crunogenus (strain DSM 25203 / XCL-2) (Thiomicrospira crunogena).